We begin with the raw amino-acid sequence, 332 residues long: Ketol-acid reductoisomerase (NADP(+)) (332 aa).

Residues 2–182 form the KARI N-terminal Rossmann domain; it reads AKVYHDTEVS…GATRAGVLET (181 aa). Residues 25 to 28, Arg48, Ser53, and 83 to 86 each bind NADP(+); these read YGSQ and DTEQ. Residue His108 is part of the active site. Residue Gly134 coordinates NADP(+). Positions 183–328 constitute a KARI C-terminal knotted domain; the sequence is TFKEETETDL…KVLREMMPWL (146 aa). 4 residues coordinate Mg(2+): Asp191, Glu195, Glu227, and Glu231. Ser252 serves as a coordination point for substrate.

This sequence belongs to the ketol-acid reductoisomerase family. It depends on Mg(2+) as a cofactor.

It catalyses the reaction (2R)-2,3-dihydroxy-3-methylbutanoate + NADP(+) = (2S)-2-acetolactate + NADPH + H(+). The enzyme catalyses (2R,3R)-2,3-dihydroxy-3-methylpentanoate + NADP(+) = (S)-2-ethyl-2-hydroxy-3-oxobutanoate + NADPH + H(+). The protein operates within amino-acid biosynthesis; L-isoleucine biosynthesis; L-isoleucine from 2-oxobutanoate: step 2/4. It functions in the pathway amino-acid biosynthesis; L-valine biosynthesis; L-valine from pyruvate: step 2/4. Functionally, involved in the biosynthesis of branched-chain amino acids (BCAA). Catalyzes an alkyl-migration followed by a ketol-acid reduction of (S)-2-acetolactate (S2AL) to yield (R)-2,3-dihydroxy-isovalerate. In the isomerase reaction, S2AL is rearranged via a Mg-dependent methyl migration to produce 3-hydroxy-3-methyl-2-ketobutyrate (HMKB). In the reductase reaction, this 2-ketoacid undergoes a metal-dependent reduction by NADPH to yield (R)-2,3-dihydroxy-isovalerate. This is Ketol-acid reductoisomerase (NADP(+)) from Dictyoglomus turgidum (strain DSM 6724 / Z-1310).